Consider the following 643-residue polypeptide: 1-deoxy-D-xylulose-5-phosphate synthase (643 aa).

Residues histidine 72 and 113–115 each bind thiamine diphosphate; that span reads GHA. Aspartate 144 contributes to the Mg(2+) binding site. Thiamine diphosphate is bound by residues 145–146, asparagine 174, tyrosine 287, and glutamate 370; that span reads GA. Position 174 (asparagine 174) interacts with Mg(2+).

Belongs to the transketolase family. DXPS subfamily. Homodimer. It depends on Mg(2+) as a cofactor. The cofactor is thiamine diphosphate.

It carries out the reaction D-glyceraldehyde 3-phosphate + pyruvate + H(+) = 1-deoxy-D-xylulose 5-phosphate + CO2. It functions in the pathway metabolic intermediate biosynthesis; 1-deoxy-D-xylulose 5-phosphate biosynthesis; 1-deoxy-D-xylulose 5-phosphate from D-glyceraldehyde 3-phosphate and pyruvate: step 1/1. Catalyzes the acyloin condensation reaction between C atoms 2 and 3 of pyruvate and glyceraldehyde 3-phosphate to yield 1-deoxy-D-xylulose-5-phosphate (DXP). The polypeptide is 1-deoxy-D-xylulose-5-phosphate synthase (Parasynechococcus marenigrum (strain WH8102)).